The sequence spans 290 residues: ATP synthase gamma chain (290 aa).

The protein belongs to the ATPase gamma chain family. In terms of assembly, F-type ATPases have 2 components, CF(1) - the catalytic core - and CF(0) - the membrane proton channel. CF(1) has five subunits: alpha(3), beta(3), gamma(1), delta(1), epsilon(1). CF(0) has three main subunits: a, b and c.

The protein localises to the cell membrane. Produces ATP from ADP in the presence of a proton gradient across the membrane. The gamma chain is believed to be important in regulating ATPase activity and the flow of protons through the CF(0) complex. This Listeria welshimeri serovar 6b (strain ATCC 35897 / DSM 20650 / CCUG 15529 / CIP 8149 / NCTC 11857 / SLCC 5334 / V8) protein is ATP synthase gamma chain.